The sequence spans 117 residues: MEFGLSWVFLVALLRGVQCQVQLVESGGGVVQPGRSLRLSCAASGFTFSSYAMHWVRQAPGKGLEWVAVISYDGSNKYYADSVKGRFTISRDNSKNTLYLQMNSLRAEDTAVYYCAR.

An N-terminal signal peptide occupies residues 1-19 (MEFGLSWVFLVALLRGVQC). Glutamine 20 is subject to Pyrrolidone carboxylic acid. Positions 20-44 (QVQLVESGGGVVQPGRSLRLSCAAS) are framework-1. Positions 20–117 (QVQLVESGGG…EDTAVYYCAR (98 aa)) constitute an Ig-like domain. A disulfide bond links cysteine 41 and cysteine 115. The tract at residues 45 to 52 (GFTFSSYA) is complementarity-determining-1. The tract at residues 53-69 (MHWVRQAPGKGLEWVAV) is framework-2. Residues 70–77 (ISYDGSNK) form a complementarity-determining-2 region. The framework-3 stretch occupies residues 78 to 115 (YYADSVKGRFTISRDNSKNTLYLQMNSLRAEDTAVYYC). The segment at 116 to 117 (AR) is complementarity-determining-3.

In terms of assembly, immunoglobulins are composed of two identical heavy chains and two identical light chains; disulfide-linked.

Its subcellular location is the secreted. It is found in the cell membrane. V region of the variable domain of immunoglobulin heavy chains that participates in the antigen recognition. Immunoglobulins, also known as antibodies, are membrane-bound or secreted glycoproteins produced by B lymphocytes. In the recognition phase of humoral immunity, the membrane-bound immunoglobulins serve as receptors which, upon binding of a specific antigen, trigger the clonal expansion and differentiation of B lymphocytes into immunoglobulins-secreting plasma cells. Secreted immunoglobulins mediate the effector phase of humoral immunity, which results in the elimination of bound antigens. The antigen binding site is formed by the variable domain of one heavy chain, together with that of its associated light chain. Thus, each immunoglobulin has two antigen binding sites with remarkable affinity for a particular antigen. The variable domains are assembled by a process called V-(D)-J rearrangement and can then be subjected to somatic hypermutations which, after exposure to antigen and selection, allow affinity maturation for a particular antigen. The sequence is that of Immunoglobulin heavy variable 3-30-3 from Homo sapiens (Human).